A 252-amino-acid chain; its full sequence is NDR1/HIN1-like protein 6 (252 aa).

A disordered region spans residues 1–46; sequence MSQHQKIYPVQDPEAATARPTAPLVPRGSSRSEHGDPSKVPLNQRP. Residues 70 to 90 traverse the membrane as a helical segment; it reads FCFLLLLVVAVGASIGILYLV. Asn-121, Asn-154, Asn-166, and Asn-180 each carry an N-linked (GlcNAc...) asparagine glycan.

Homodimer. Highly expressed in seeds and at lower level in roots and senescing leaves. Expressed in leaves and flowers.

It localises to the cell membrane. The protein resides in the cytoplasm. The protein localises to the cytosol. Functionally, plays an important role in the abiotic stresses-induced abscisic acid (ABA) signaling and biosynthesis. Acts as a positive regulator of ABA-mediated seed germination inhibition. Functions downstream of ABF2/AREB1, ABF4/AREB2 and ABF3. This is NDR1/HIN1-like protein 6 from Arabidopsis thaliana (Mouse-ear cress).